Consider the following 175-residue polypeptide: Co-chaperone protein HscB homolog (175 aa).

Residues 7–79 (SHFALFNLPE…LKRARYLLSL (73 aa)) form the J domain.

The protein belongs to the HscB family. In terms of assembly, interacts with HscA and stimulates its ATPase activity.

Functionally, co-chaperone involved in the maturation of iron-sulfur cluster-containing proteins. Seems to help targeting proteins to be folded toward HscA. This is Co-chaperone protein HscB homolog from Paraburkholderia phymatum (strain DSM 17167 / CIP 108236 / LMG 21445 / STM815) (Burkholderia phymatum).